Reading from the N-terminus, the 643-residue chain is Thioredoxin reductase 3 (643 aa).

Residues methionine 1–glutamate 53 form a disordered region. At arginine 26 the chain carries Asymmetric dimethylarginine; alternate. Arginine 26 carries the omega-N-methylarginine; alternate modification. 2 positions are modified to phosphoserine: serine 41 and serine 42. In terms of domain architecture, Glutaredoxin spans arginine 56–aspartate 156. Aspartate 158–phenylalanine 187 is an FAD binding site. The cysteines at positions 203 and 208 are disulfide-linked. An N6-succinyllysine modification is found at lysine 379. The Proton acceptor role is filled by histidine 616. A cross-link (cysteinyl-selenocysteine (Cys-Sec)) is located at residues cysteine 641–selenocysteine 642. Position 642 (selenocysteine 642) is a non-standard amino acid, selenocysteine.

Belongs to the class-I pyridine nucleotide-disulfide oxidoreductase family. Homodimer. FAD is required as a cofactor.

The protein resides in the cytoplasm. It localises to the nucleus. Its subcellular location is the microsome. It is found in the endoplasmic reticulum. It carries out the reaction [thioredoxin]-dithiol + NADP(+) = [thioredoxin]-disulfide + NADPH + H(+). In terms of biological role, displays thioredoxin reductase, glutaredoxin and glutathione reductase activities. Catalyzes disulfide bond isomerization. Promotes disulfide bond formation between GPX4 and various sperm proteins and may play a role in sperm maturation by promoting formation of sperm structural components. The sequence is that of Thioredoxin reductase 3 from Homo sapiens (Human).